A 341-amino-acid chain; its full sequence is tRNA N6-adenosine threonylcarbamoyltransferase (341 aa).

Residues histidine 111 and histidine 115 each contribute to the Fe cation site. Substrate-binding positions include 134-138, aspartate 167, glycine 180, and asparagine 272; that span reads LVSGG. Fe cation is bound at residue aspartate 300.

The protein belongs to the KAE1 / TsaD family. It depends on Fe(2+) as a cofactor.

Its subcellular location is the cytoplasm. The catalysed reaction is L-threonylcarbamoyladenylate + adenosine(37) in tRNA = N(6)-L-threonylcarbamoyladenosine(37) in tRNA + AMP + H(+). In terms of biological role, required for the formation of a threonylcarbamoyl group on adenosine at position 37 (t(6)A37) in tRNAs that read codons beginning with adenine. Is involved in the transfer of the threonylcarbamoyl moiety of threonylcarbamoyl-AMP (TC-AMP) to the N6 group of A37, together with TsaE and TsaB. TsaD likely plays a direct catalytic role in this reaction. This is tRNA N6-adenosine threonylcarbamoyltransferase from Psychromonas ingrahamii (strain DSM 17664 / CCUG 51855 / 37).